The sequence spans 393 residues: Ornithine decarboxylase 2 (393 aa).

K62 bears the N6-(pyridoxal phosphate)lysine mark. Pyridoxal 5'-phosphate contacts are provided by residues S194, G231, and E265 to R268. Y314–Y315 lines the substrate pocket. Catalysis depends on C343, which acts as the Proton donor; shared with dimeric partner. A substrate-binding site is contributed by D344. Y371 serves as a coordination point for pyridoxal 5'-phosphate.

The protein belongs to the Orn/Lys/Arg decarboxylase class-II family. As to quaternary structure, homodimer. Only the dimer is catalytically active, as the active sites are constructed of residues from both monomers. Pyridoxal 5'-phosphate serves as cofactor.

The catalysed reaction is L-ornithine + H(+) = putrescine + CO2. Its pathway is amine and polyamine biosynthesis; putrescine biosynthesis via L-ornithine pathway; putrescine from L-ornithine: step 1/1. Inhibited by antizyme (AZ) in response to polyamine levels. AZ inhibits the assembly of the functional homodimer by binding to ODC monomers and targeting them for ubiquitin-independent proteolytic destruction by the 26S proteasome. Its function is as follows. Catalyzes the first and rate-limiting step of polyamine biosynthesis that converts ornithine into putrescine, which is the precursor for the polyamines, spermidine and spermine. Polyamines are essential for cell proliferation and are implicated in cellular processes, ranging from DNA replication to apoptosis. The protein is Ornithine decarboxylase 2 (Odc2) of Drosophila melanogaster (Fruit fly).